A 429-amino-acid polypeptide reads, in one-letter code: D-galactonate dehydratase family member Caci_4410 (429 aa).

Residues 1–22 (MTDANHLLDPSGALPQTRPPWT) are disordered. Residue D233 coordinates Mg(2+). A D-arabinonate-binding site is contributed by H235. Mg(2+)-binding residues include E259 and E285. D-arabinonate contacts are provided by E285, R306, H335, and E362.

This sequence belongs to the mandelate racemase/muconate lactonizing enzyme family. GalD subfamily.

In terms of biological role, has no detectable activity with D-mannonate and with a panel of 70 other acid sugars (in vitro), in spite of the conservation of the residues that are expected to be important for catalytic activity and cofactor binding. May have evolved a divergent function. The polypeptide is D-galactonate dehydratase family member Caci_4410 (Catenulispora acidiphila (strain DSM 44928 / JCM 14897 / NBRC 102108 / NRRL B-24433 / ID139908)).